Reading from the N-terminus, the 140-residue chain is Ribosome maturation factor RimP (140 aa).

It belongs to the RimP family.

It is found in the cytoplasm. In terms of biological role, required for maturation of 30S ribosomal subunits. The sequence is that of Ribosome maturation factor RimP from Campylobacter jejuni subsp. jejuni serotype O:23/36 (strain 81-176).